The following is a 30-amino-acid chain: Trypsin inhibitor 3 (30 aa).

Disulfide bonds link Cys-4/Cys-21, Cys-11/Cys-23, and Cys-17/Cys-29.

This sequence belongs to the protease inhibitor I7 (squash-type serine protease inhibitor) family.

Its subcellular location is the secreted. Functionally, inhibits lysyl endopeptidase and trypsin. In Cucumis melo var. conomon (Oriental pickling melon), this protein is Trypsin inhibitor 3.